Here is a 1033-residue protein sequence, read N- to C-terminus: Isoleucine--tRNA ligase 2 (1033 aa).

The 'HIGH' region motif lies at 47–57; it reads PTANGLPHVGH. A 'KMSKS' region motif is present at residues 590-594; that stretch reads KMSKS. An ATP-binding site is contributed by Lys593.

This sequence belongs to the class-I aminoacyl-tRNA synthetase family. IleS type 2 subfamily. In terms of assembly, monomer. Zn(2+) is required as a cofactor.

The protein resides in the cytoplasm. The catalysed reaction is tRNA(Ile) + L-isoleucine + ATP = L-isoleucyl-tRNA(Ile) + AMP + diphosphate. In terms of biological role, catalyzes the attachment of isoleucine to tRNA(Ile). As IleRS can inadvertently accommodate and process structurally similar amino acids such as valine, to avoid such errors it has two additional distinct tRNA(Ile)-dependent editing activities. One activity is designated as 'pretransfer' editing and involves the hydrolysis of activated Val-AMP. The other activity is designated 'posttransfer' editing and involves deacylation of mischarged Val-tRNA(Ile). This chain is Isoleucine--tRNA ligase 2, found in Bacillus anthracis.